The chain runs to 439 residues: Branched-chain amino acid permease BrnQ (439 aa).

Residues 1-9 (MTHQLKSRD) are Cytoplasmic-facing. Residues 10–30 (IIALGFMTFALFVGAGNIIFP) traverse the membrane as a helical segment. Over 31–43 (PMVGLQAGEHVWT) the chain is Periplasmic. Residues 44-64 (AAIGFLITAVGLPVLTVVALA) form a helical membrane-spanning segment. At 65–79 (KVGGGVDSLSTPIGK) the chain is on the cytoplasmic side. A helical transmembrane segment spans residues 80 to 100 (VAGLLLATVCYLAVGPLFATP). Residues 101–118 (RTATVSFEVGIAPLTGDS) lie on the Periplasmic side of the membrane. A helical membrane pass occupies residues 119 to 139 (AMPLLIYSVVYFAIVILVSLY). The Cytoplasmic segment spans residues 140 to 149 (PGKLLDTVGN). The chain crosses the membrane as a helical span at residues 150-170 (FLAPLKIIALVILSVAAIVWP). The Periplasmic segment spans residues 171–189 (AGPISNALDAYQNAAFSNG). Residues 190 to 210 (FVNGYLTMDTLGAMVFGIVIV) traverse the membrane as a helical segment. Residues 211–226 (NAARSRGVTEARLLTR) are Cytoplasmic-facing. Residues 227 to 247 (YTVWAGLMAGVGLTLLYLALF) traverse the membrane as a helical segment. Topologically, residues 248–277 (RLGSDSATLVDQSANGAAILHAYVQHTFGG) are periplasmic. The helical transmembrane segment at 278–298 (AGSFLLAALIFIACLVTAVGL) threads the bilayer. Residues 299–316 (TCACAEFFAQYIPLSYRT) lie on the Cytoplasmic side of the membrane. The chain crosses the membrane as a helical span at residues 317-337 (LVFILGGFSMVVSNLGLSHLI). Glutamine 338 is a topological domain (periplasmic). The chain crosses the membrane as a helical span at residues 339–359 (ISIPVLTAIYPPCIALVVLSF). Residues 360 to 369 (TRSWWHNSTR) lie on the Cytoplasmic side of the membrane. A helical transmembrane segment spans residues 370–390 (IIAPAMFISLLFGILDGIKAS). Over 391–404 (AFGDMLPAWSQRLP) the chain is Periplasmic. The helical transmembrane segment at 405–425 (LAEQGLAWLMPTVVMVILAII) threads the bilayer. At 426-439 (WDRAAGRQVTSSAH) the chain is on the cytoplasmic side.

It belongs to the branched chain amino acid transporter family.

Its subcellular location is the cell inner membrane. In terms of biological role, liv-II branched chain amino acid transport system, which transports leucine, valine and isoleucine. This chain is Branched-chain amino acid permease BrnQ, found in Salmonella typhimurium (strain LT2 / SGSC1412 / ATCC 700720).